The chain runs to 351 residues: Glycerol-3-phosphate dehydrogenase [NAD(P)+] (351 aa).

The NADPH site is built by serine 18, tryptophan 19, arginine 38, and lysine 122. Positions 122, 153, and 155 each coordinate sn-glycerol 3-phosphate. Alanine 157 serves as a coordination point for NADPH. Sn-glycerol 3-phosphate is bound by residues lysine 208, aspartate 261, serine 271, arginine 272, and asparagine 273. Residue lysine 208 is the Proton acceptor of the active site. An NADPH-binding site is contributed by arginine 272. Glutamate 297 serves as a coordination point for NADPH.

It belongs to the NAD-dependent glycerol-3-phosphate dehydrogenase family.

The protein resides in the cytoplasm. It catalyses the reaction sn-glycerol 3-phosphate + NAD(+) = dihydroxyacetone phosphate + NADH + H(+). The catalysed reaction is sn-glycerol 3-phosphate + NADP(+) = dihydroxyacetone phosphate + NADPH + H(+). It participates in membrane lipid metabolism; glycerophospholipid metabolism. In terms of biological role, catalyzes the reduction of the glycolytic intermediate dihydroxyacetone phosphate (DHAP) to sn-glycerol 3-phosphate (G3P), the key precursor for phospholipid synthesis. In Bordetella pertussis (strain Tohama I / ATCC BAA-589 / NCTC 13251), this protein is Glycerol-3-phosphate dehydrogenase [NAD(P)+].